Consider the following 783-residue polypeptide: Mitochondrial intermediate peptidase (783 aa).

The transit peptide at 1–33 (MKAGIPLSRCTQRIPLLVARQVSRNITTTTTKF) directs the protein to the mitochondrion. H565 is a Zn(2+) binding site. E566 is a catalytic residue. Positions 569 and 572 each coordinate Zn(2+).

This sequence belongs to the peptidase M3 family. The cofactor is Zn(2+).

The protein localises to the mitochondrion matrix. The enzyme catalyses Release of an N-terminal octapeptide as second stage of processing of some proteins imported into the mitochondrion.. Cleaves proteins, imported into the mitochondrion, to their mature size. While most mitochondrial precursor proteins are processed to the mature form in one step by mitochondrial processing peptidase (MPP), the sequential cleavage by MIP of an octapeptide after initial processing by MPP is a required step for a subgroup of nuclear-encoded precursor proteins destined for the matrix or the inner membrane. This Candida albicans (strain SC5314 / ATCC MYA-2876) (Yeast) protein is Mitochondrial intermediate peptidase (OCT1).